A 249-amino-acid chain; its full sequence is Eukaryotic translation initiation factor 3 subunit J-A (249 aa).

Positions 1–15 (MADADSWDADSFEPE) are enriched in acidic residues. The disordered stretch occupies residues 1-104 (MADADSWDAD…DTPLTPEDEL (104 aa)). Positions 16–27 (EPIKKAAVHDKW) are enriched in basic and acidic residues. The segment covering 28-52 (EGEDEDDDVKDNWDDDEEEEKEEEE) has biased composition (acidic residues). Positions 34–96 (DDVKDNWDDD…QQLEETKRDT (63 aa)) form a coiled coil. Basic and acidic residues predominate over residues 53-96 (EKKTEAKPTEKKKLSEKIKEKENLQRKKQEELRKQQLEETKRDT).

This sequence belongs to the eIF-3 subunit J family. In terms of assembly, component of the eukaryotic translation initiation factor 3 (eIF-3) complex, which is composed of 13 subunits: eif3a, eif3b, eif3c, eif3d, eif3e, eif3f, eif3g, eif3h, eif3i, eif3j, eif3k, eif3l and eif3m.

It localises to the cytoplasm. Component of the eukaryotic translation initiation factor 3 (eIF-3) complex, which is involved in protein synthesis of a specialized repertoire of mRNAs and, together with other initiation factors, stimulates binding of mRNA and methionyl-tRNAi to the 40S ribosome. The eIF-3 complex specifically targets and initiates translation of a subset of mRNAs involved in cell proliferation. The sequence is that of Eukaryotic translation initiation factor 3 subunit J-A (eif3ja) from Danio rerio (Zebrafish).